We begin with the raw amino-acid sequence, 227 residues long: Uracil-DNA glycosylase (227 aa).

D64 functions as the Proton acceptor in the catalytic mechanism.

Belongs to the uracil-DNA glycosylase (UDG) superfamily. UNG family.

It is found in the cytoplasm. It carries out the reaction Hydrolyzes single-stranded DNA or mismatched double-stranded DNA and polynucleotides, releasing free uracil.. In terms of biological role, excises uracil residues from the DNA which can arise as a result of misincorporation of dUMP residues by DNA polymerase or due to deamination of cytosine. The chain is Uracil-DNA glycosylase from Alkaliphilus metalliredigens (strain QYMF).